The primary structure comprises 570 residues: Serine/threonine-protein kinase STY17 (570 aa).

The disordered stretch occupies residues 112–145 (LNGNSGDVDPSDPAVNEDAQSSYNSRSLAPPTFG). Residues 129–145 (DAQSSYNSRSLAPPTFG) show a composition bias toward polar residues. Positions 180–260 (EITFSTIDRP…PCSKQKSITF (81 aa)) constitute an ACT domain. Residues 292–545 (LKIEKKVACG…EIIEMLNQLI (254 aa)) enclose the Protein kinase domain. ATP contacts are provided by residues 298–306 (VACGSYGEL) and Lys-319. The active-site Proton acceptor is Asp-413. Residue Ser-441 is modified to Phosphoserine. Residue Thr-445 is modified to Phosphothreonine.

This sequence belongs to the protein kinase superfamily. Ser/Thr protein kinase family. Autophosphorylated on serine and threonine residues. Autophosphorylated at Thr-445.

Its subcellular location is the cytoplasm. It is found in the cytosol. It carries out the reaction L-seryl-[protein] + ATP = O-phospho-L-seryl-[protein] + ADP + H(+). The enzyme catalyses L-threonyl-[protein] + ATP = O-phospho-L-threonyl-[protein] + ADP + H(+). With respect to regulation, activated by autophosphorylation at Thr-445. Functionally, serine/threonine protein kinase that specifically phosphorylates chloroplast precursor proteins in the cytosol within the cleavable presequences (transit peptides). May be part of a cytosolic regulatory network involved in chloroplast protein import. Does not phosphorylate mitochondrion precursor proteins. Specific for ATP and does not utilize other NTPs. Plays a role in chloroplast biogenesis and differentiation in cotyledons, possibly through phosphorylation of chloroplast preproteins. In Arabidopsis thaliana (Mouse-ear cress), this protein is Serine/threonine-protein kinase STY17.